Here is a 439-residue protein sequence, read N- to C-terminus: 26S rRNA (cytosine-C(5))-methyltransferase nsun-5 (439 aa).

Residues Asp-266, Asp-293, and Asp-313 each contribute to the S-adenosyl-L-methionine site. The Nucleophile role is filled by Cys-366.

The protein belongs to the class I-like SAM-binding methyltransferase superfamily. RsmB/NOP family.

The catalysed reaction is a cytidine in 26S rRNA + S-adenosyl-L-methionine = a 5-methylcytidine in 26S rRNA + S-adenosyl-L-homocysteine + H(+). S-adenosyl-L-methionine-dependent methyltransferase which methylates the carbon-5 position of cytosine 2381 to 5-methylcytosine (m5C2381) in 26S rRNA. Plays a role in the production of mature 5S, 5.8S, 18S and 26S rRNAs and promotes the processing of the internally transcribed spacer 2 (ITS2), which separates the 5.8S and 26S rRNAs on large pre-rRNA precursors. May play a role in the translation of leucine and proline codons. May play a role in maintaining ribosomal frameshifting in response to osmotic stress. Not required for global translation. This chain is 26S rRNA (cytosine-C(5))-methyltransferase nsun-5, found in Caenorhabditis elegans.